A 276-amino-acid polypeptide reads, in one-letter code: MKQQILQEMRVLVTINEEIEIKRRINFIKKKLQQAECYTLVLGISGGVDSSTAGRLCQLAVEQLNQSTDTDKYQFIAVRLPYAIQKDEDEAQLALQFIRPSHVITINIKNGADGIHESTLAALQTSSVNLSADTNIDFIKGNVKARMRMIAQYEIAGLTGGLVVGTDHSAENITGFYTKHGDGACDLAPLFGLNKRQIRALAKQLGAPAILIEKAPTADLEEDKPQLQDEHALGITYDQIDDFLEGKAVTQEIEDKLIAIYLRTQHKRQAVPTIYD.

43–50 (GISGGVDS) serves as a coordination point for ATP. D49 provides a ligand contact to Mg(2+). R146 serves as a coordination point for deamido-NAD(+). T166 lines the ATP pocket. Mg(2+) is bound at residue E171. Positions 179 and 186 each coordinate deamido-NAD(+). 2 residues coordinate ATP: K195 and T217. 266-267 (HK) provides a ligand contact to deamido-NAD(+).

This sequence belongs to the NAD synthetase family. As to quaternary structure, homodimer.

It carries out the reaction deamido-NAD(+) + NH4(+) + ATP = AMP + diphosphate + NAD(+) + H(+). The protein operates within cofactor biosynthesis; NAD(+) biosynthesis; NAD(+) from deamido-NAD(+) (ammonia route): step 1/1. Catalyzes the ATP-dependent amidation of deamido-NAD to form NAD. Uses ammonia as a nitrogen source. This Psychromonas ingrahamii (strain DSM 17664 / CCUG 51855 / 37) protein is NH(3)-dependent NAD(+) synthetase.